We begin with the raw amino-acid sequence, 213 residues long: Superoxide dismutase [Fe] (213 aa).

Histidine 26, histidine 73, aspartate 156, and histidine 160 together coordinate Fe cation.

This sequence belongs to the iron/manganese superoxide dismutase family. As to quaternary structure, homodimer. Fe cation serves as cofactor.

It carries out the reaction 2 superoxide + 2 H(+) = H2O2 + O2. Its function is as follows. Destroys superoxide anion radicals which are normally produced within the cells and which are toxic to biological systems. The chain is Superoxide dismutase [Fe] (sodB) from Helicobacter pylori (strain J99 / ATCC 700824) (Campylobacter pylori J99).